The chain runs to 928 residues: Outer membrane protein SlpA (928 aa).

An N-terminal signal peptide occupies residues 1 to 23 (MKKRLVTLLAGLLTVLSMGFGLA). The region spanning 24–84 (QFSDVPAGHW…QQIEEELKTQ (61 aa)) is the SLH domain.

In terms of assembly, homotrimer.

It is found in the cell outer membrane. In terms of biological role, plays an important role in the structural organization and integrity of the cell envelope, bridging the outer membrane to the peptidoglyan layer. Appears to be a nonselective channel. This Thermus thermophilus (strain ATCC 27634 / DSM 579 / HB8) protein is Outer membrane protein SlpA (slpA).